Here is a 242-residue protein sequence, read N- to C-terminus: Small ribosomal subunit protein uS2 (242 aa).

This sequence belongs to the universal ribosomal protein uS2 family.

The polypeptide is Small ribosomal subunit protein uS2 (Aeromonas hydrophila subsp. hydrophila (strain ATCC 7966 / DSM 30187 / BCRC 13018 / CCUG 14551 / JCM 1027 / KCTC 2358 / NCIMB 9240 / NCTC 8049)).